A 1385-amino-acid polypeptide reads, in one-letter code: Coiled-coil domain-containing protein 7 (1385 aa).

A coiled-coil region spans residues 299–330 (LDAEYKQMQCDFQLLSEEKLVLENELQKLKDK). The interval 329 to 364 (DKEKTKPTNNRTKKAVKTVKKKDKGKSEDSEKKMSP) is disordered. Over residues 339 to 352 (RTKKAVKTVKKKDK) the composition is skewed to basic residues. Residues 353 to 364 (GKSEDSEKKMSP) show a composition bias toward basic and acidic residues. The stretch at 374-411 (LDQVQKVARLEIENKVLQEQLKQALQEAEKAKHQLNYF) forms a coiled coil. 3 disordered regions span residues 422 to 545 (GKTE…SKEV), 572 to 752 (TESK…EPNE), and 809 to 834 (TKKL…LKHQ). Residues 425-436 (ETTMQVGNSQTK) show a composition bias toward polar residues. Basic and acidic residues-rich tracts occupy residues 437–455 (VKGE…RKSL) and 481–490 (LIEKSSEKKR). 3 stretches are compositionally biased toward polar residues: residues 493–503 (PAISDLSQILK), 511–528 (LESS…YKSP), and 536–545 (LTTVSSSKEV). Basic and acidic residues predominate over residues 573–589 (ESKKADVSEEQLQKMTE). Over residues 654–664 (RIQSETKNLKA) the composition is skewed to polar residues. 2 stretches are compositionally biased toward basic and acidic residues: residues 665-676 (TRNESFHSHNDV) and 685-697 (QDTK…EVKK). Positions 701 to 711 (FQDNQLSTHNE) are enriched in polar residues. A compositionally biased stretch (basic and acidic residues) spans 712–726 (VPNERLVVEHQESLS).

In terms of tissue distribution, expressed in epithelium of normal cervix and cervical cancer. Overexpressed in early and interim cervical cancer.

May play a role in tumorigenesis. This is Coiled-coil domain-containing protein 7 (CCDC7) from Homo sapiens (Human).